The following is a 114-amino-acid chain: Protein ORF3 (114 aa).

Residues 1-28 form a membrane association region; the sequence is MGSRPCALGLFCCCSSCFCLCCPRHRPV. Hydrophobic stretches follow at residues 6-22 and 33-53; these read CALGLFCCCSSCFCLCC and AAVGGAAAVPAVVSGVTGLIL. The segment at 6-22 is induction of host SIRPA expression; sequence CALGLFCCCSSCFCLCC. The segment at 28–68 is interaction with host HPX; it reads VSRLAAAVGGAAAVPAVVSGVTGLILSPSQSPIFIQPTPSP. The tract at residues 48–72 is interaction with the capsid protein; it reads VTGLILSPSQSPIFIQPTPSPPMSP. At S71 the chain carries Phosphoserine; by host. A homodimerization, and interaction with host AMBP/bikunin region spans residues 72–114; the sequence is PLRPGLDLVFANPPDHSAPLGVTRPSAPPLPHVVDLPQLGPRR. Residues 91 to 114 form a disordered region; the sequence is LGVTRPSAPPLPHVVDLPQLGPRR. The interaction with host SRC, HCK, FYN, PIK3R3 and GRB2 stretch occupies residues 95-104; that stretch reads RPSAPPLPHV. The PTAP/PSAP motif signature appears at 96–99; sequence PSAP.

It belongs to the hepevirus ORF3 protein family. As to quaternary structure, forms homooligomers. Interacts with host SRC, HCK, FYN, PIK3R3 and GRB2 (via SH3 domain); binding does not activate the kinases. Interacts with host AMBP/bikunin and AMBP/alpha-1-microglobulin peptides. Interacts with host HPX/hemopexin. Interacts (when phosphorylated) with capsid protein ORF2. Interacts with host TSG101; this interaction plays a role in viral release from the host cell. Interacts with host SIRPA; this interaction down-regulates the phosphorylation of host IRF3. In terms of processing, palmitoylated in the N-terminus.

The protein localises to the host endoplasmic reticulum membrane. Its subcellular location is the host cytoplasm. The protein resides in the host cytoskeleton. It localises to the virion. It is found in the host cell membrane. In terms of biological role, small multifunctional phosphoprotein involved in virion morphogenesis, egress and counteracting host innate immunity. Plays critical roles in the final steps of viral release by interacting with host TSG101, a member of the vacuolar protein-sorting pathway and using other cellular host proteins involved in vesicle formation pathway. Also acts as a viroporin and forms ion conductive pores allowing viral particle release. Impairs the generation of type I interferon by down-regulating host TLR3 and TLR7 as well as their downstream signaling pathways. Down-regulates the phosphorylation of host IRF3 via the interaction with host SIRP-alpha, thereby inhibiting IFN-I expression. Interacts with host microtubules. The chain is Protein ORF3 from Hepatitis E virus genotype 1 (isolate Human/China/HeBei/1987) (HEV).